A 121-amino-acid chain; its full sequence is MNAHQEDTPPGPSTVFRPPTSSRPLETPHCREIRIGIAGITVTLSLCGCANARVPTLRSATADNSENTGFKNVPDLRTDQPKPPSKKRSCDPSEYRVSELKESLITTTPSRPRTARRCIRL.

Disordered stretches follow at residues 1 to 28 and 57 to 95; these read MNAH…LETP and LRSA…PSEY. Residues 58 to 70 show a composition bias toward polar residues; it reads RSATADNSENTGF.

Belongs to the gyrovirus apoptin family.

The protein resides in the host nucleus. Functionally, may act as transcriptional regulator. Induces apoptosis in infected cells. Element of infectious replication cycle. This Gallus gallus (Chicken) protein is Apoptin (VP3).